A 387-amino-acid chain; its full sequence is MNQNIEKRLFTSESVSEGHPDKICDQISDAILDEVLKQDKNAKVACEVFATTNYLLIGGQISSTAIVNYEQVARDVLKKNGYVDDAYGINANTCKIDIKIESQSPDIAQGVELSNDQIGAGDQGIMFGYATNESKTYLPLAITIAHELVYNATSQRKKGLFKWARPDMKSQVTIDYTNINNPKIDTILMSIQHDPNYNETEFKKYIKENIMNLVAKEFNLNTDFKVLINPTGRFVIGGPQGDTGLTGRKIIADTYGGYSRHGGGAFSGKDSTKVDRSAAYMCRYVAKNLVAAGLADKIEIQVSYAIGISQPISIFIETFNTHKVDLNTIYKAVYENFDFSVSSMIKTLDLKKPIFFKTSKYGHFGKKDLPWEKLDKIEVLKEYKKCS.

ATP is bound at residue H19. D21 lines the Mg(2+) pocket. E47 contacts K(+). Q103 is a binding site for L-methionine. Residues 103–113 are flexible loop; sequence QSPDIAQGVEL. ATP is bound by residues 167 to 169, 233 to 234, D242, 248 to 249, A265, and K269; these read DMK, RF, and RK. D242 serves as a coordination point for L-methionine. L-methionine is bound at residue K273.

This sequence belongs to the AdoMet synthase family. Homotetramer; dimer of dimers. Mg(2+) serves as cofactor. It depends on K(+) as a cofactor.

The protein resides in the cytoplasm. It catalyses the reaction L-methionine + ATP + H2O = S-adenosyl-L-methionine + phosphate + diphosphate. It participates in amino-acid biosynthesis; S-adenosyl-L-methionine biosynthesis; S-adenosyl-L-methionine from L-methionine: step 1/1. Catalyzes the formation of S-adenosylmethionine (AdoMet) from methionine and ATP. The overall synthetic reaction is composed of two sequential steps, AdoMet formation and the subsequent tripolyphosphate hydrolysis which occurs prior to release of AdoMet from the enzyme. The chain is S-adenosylmethionine synthase from Mycoplasma mycoides subsp. mycoides SC (strain CCUG 32753 / NCTC 10114 / PG1).